Here is a 44-residue protein sequence, read N- to C-terminus: Photosystem II reaction center protein J (44 aa).

The chain crosses the membrane as a helical span at residues 12–32 (IPLWIVGFVVGSLALGLLGIL).

It belongs to the PsbJ family. As to quaternary structure, PSII is composed of 1 copy each of membrane proteins PsbA, PsbB, PsbC, PsbD, PsbE, PsbF, PsbH, PsbI, PsbJ, PsbK, PsbL, PsbM, PsbT, PsbY, PsbZ, Psb30/Ycf12, at least 3 peripheral proteins of the oxygen-evolving complex and a large number of cofactors. It forms dimeric complexes.

The protein localises to the plastid. It localises to the chloroplast thylakoid membrane. In terms of biological role, one of the components of the core complex of photosystem II (PSII). PSII is a light-driven water:plastoquinone oxidoreductase that uses light energy to abstract electrons from H(2)O, generating O(2) and a proton gradient subsequently used for ATP formation. It consists of a core antenna complex that captures photons, and an electron transfer chain that converts photonic excitation into a charge separation. This is Photosystem II reaction center protein J from Bigelowiella natans (Pedinomonas minutissima).